Here is a 229-residue protein sequence, read N- to C-terminus: Lipoprotein-releasing system ATP-binding protein LolD 1 (229 aa).

The ABC transporter domain maps to 2-229 (LVVSELSKSY…VRRGRFGITA (228 aa)). 38–45 (GPSGSGKT) is a binding site for ATP.

The protein belongs to the ABC transporter superfamily. Lipoprotein translocase (TC 3.A.1.125) family. As to quaternary structure, the complex is composed of two ATP-binding proteins (LolD) and two transmembrane proteins (LolC and LolE).

The protein localises to the cell inner membrane. Functionally, part of the ABC transporter complex LolCDE involved in the translocation of mature outer membrane-directed lipoproteins, from the inner membrane to the periplasmic chaperone, LolA. Responsible for the formation of the LolA-lipoprotein complex in an ATP-dependent manner. The sequence is that of Lipoprotein-releasing system ATP-binding protein LolD 1 from Rhodopirellula baltica (strain DSM 10527 / NCIMB 13988 / SH1).